The sequence spans 381 residues: Transaldolase 2 (381 aa).

Catalysis depends on lysine 141, which acts as the Schiff-base intermediate with substrate.

This sequence belongs to the transaldolase family. Type 2 subfamily.

It localises to the cytoplasm. It catalyses the reaction D-sedoheptulose 7-phosphate + D-glyceraldehyde 3-phosphate = D-erythrose 4-phosphate + beta-D-fructose 6-phosphate. It participates in carbohydrate degradation; pentose phosphate pathway; D-glyceraldehyde 3-phosphate and beta-D-fructose 6-phosphate from D-ribose 5-phosphate and D-xylulose 5-phosphate (non-oxidative stage): step 2/3. In terms of biological role, transaldolase is important for the balance of metabolites in the pentose-phosphate pathway. In Nostoc sp. (strain PCC 7120 / SAG 25.82 / UTEX 2576), this protein is Transaldolase 2 (tal2).